Reading from the N-terminus, the 577-residue chain is Moesin (577 aa).

An FERM domain is found at 2–295 (PKTINVRVTT…GNHELYMRRR (294 aa)). S74 carries the phosphoserine modification. An N6-acetyllysine modification is found at K79. Position 83 is an N6-succinyllysine (K83). Residues 115-120 (IYCPPE) carry the [IL]-x-C-x-x-[DE] motif motif. Y116 bears the Phosphotyrosine mark. At C117 the chain carries S-nitrosocysteine. 2 positions are modified to N6-acetyllysine: K139 and K165. Positions 376–414 (EQERKRAQSEAEKLAKERQEAEEAKEALLKASRDQKKTQ) are enriched in basic and acidic residues. 2 disordered regions span residues 376–415 (EQER…KTQE) and 434–518 (ARQK…NERV). Position 407 is a phosphoserine (S407). Acidic residues predominate over residues 476–487 (AENDQDEQDENG). Over residues 492 to 518 (ADLRADAMAKDRSEEERTTEAEKNERV) the composition is skewed to basic and acidic residues. Phosphoserine is present on S527. At T558 the chain carries Phosphothreonine; by ROCK2 and STK10.

Binds NHERF1. In resting T-cells, part of a PAG1-NHERF1-MSN complex which is disrupted upon TCR activation. Interacts with PPP1R16B. Interacts with PDZD8. Interacts with SELPLG and SYK; mediates the activation of SYK by SELPLG. Interacts with PDPN (via cytoplasmic domain); activates RHOA and promotes epithelial-mesenchymal transition. Interacts with SPN/CD43 cytoplasmic tail, CD44 and ICAM2. In terms of processing, phosphorylation on Thr-558 is crucial for the formation of microvilli-like structures. Phosphorylation by ROCK2 suppresses the head-to-tail association of the N-terminal and C-terminal halves resulting in an opened conformation which is capable of actin and membrane-binding. Phosphorylation on Thr-558 by STK10 negatively regulates lymphocyte migration and polarization. S-nitrosylation of Cys-117 is induced by interferon-gamma and oxidatively-modified low-densitity lipoprotein (LDL(ox)) implicating the iNOS-S100A8/9 transnitrosylase complex.

Its subcellular location is the cell membrane. The protein resides in the cytoplasm. It is found in the cytoskeleton. It localises to the apical cell membrane. The protein localises to the cell projection. Its subcellular location is the microvillus membrane. The protein resides in the microvillus. With respect to regulation, a head-to-tail association, of the N-terminal and C-terminal halves results in a closed conformation (inactive form) which is incapable of actin or membrane-binding. Probably involved in connections of major cytoskeletal structures to the plasma membrane. Plays a role in regulating the proliferation, migration, and adhesion of human lymphoid cells and participates in immunologic synapse formation. The polypeptide is Moesin (Sus scrofa (Pig)).